A 396-amino-acid chain; its full sequence is S-adenosylmethionine synthase (396 aa).

His16 is a binding site for ATP. Position 18 (Asp18) interacts with Mg(2+). Glu44 contacts K(+). Positions 57 and 100 each coordinate L-methionine. The tract at residues 100 to 110 is flexible loop; that stretch reads QSPDINQGVDR. Residues 165 to 167, Asp240, 246 to 247, Ala263, and Lys267 each bind ATP; these read DAK and RK. L-methionine is bound at residue Asp240. Residue Lys271 participates in L-methionine binding.

Belongs to the AdoMet synthase family. Homotetramer; dimer of dimers. It depends on Mg(2+) as a cofactor. K(+) is required as a cofactor.

The protein resides in the cytoplasm. It catalyses the reaction L-methionine + ATP + H2O = S-adenosyl-L-methionine + phosphate + diphosphate. It functions in the pathway amino-acid biosynthesis; S-adenosyl-L-methionine biosynthesis; S-adenosyl-L-methionine from L-methionine: step 1/1. Functionally, catalyzes the formation of S-adenosylmethionine (AdoMet) from methionine and ATP. The overall synthetic reaction is composed of two sequential steps, AdoMet formation and the subsequent tripolyphosphate hydrolysis which occurs prior to release of AdoMet from the enzyme. This chain is S-adenosylmethionine synthase, found in Pseudomonas fluorescens (strain SBW25).